The chain runs to 76 residues: Small ribosomal subunit protein bS18 (76 aa).

The protein belongs to the bacterial ribosomal protein bS18 family. In terms of assembly, part of the 30S ribosomal subunit. Forms a tight heterodimer with protein bS6.

Its function is as follows. Binds as a heterodimer with protein bS6 to the central domain of the 16S rRNA, where it helps stabilize the platform of the 30S subunit. This Marinomonas sp. (strain MWYL1) protein is Small ribosomal subunit protein bS18.